Here is a 556-residue protein sequence, read N- to C-terminus: (6-4)DNA photolyase (556 aa).

The Photolyase/cryptochrome alpha/beta domain occupies Ser-24–Leu-162. Glu-262 contacts phosphate. Residues Lys-263, Thr-276–Ser-280, Gln-317–Arg-321, Trp-380–His-383, Arg-386, Asp-415–Asp-417, and Asn-421 contribute to the FAD site. Position 320 (Trp-320) interacts with DNA. The interval His-382–His-387 is interaction with DNA. Trp-427 contacts DNA. Residues Leu-534–Lys-556 form a disordered region. Basic and acidic residues predominate over residues Gln-539–Ile-548.

It belongs to the DNA photolyase class-1 family. FAD is required as a cofactor. As to expression, expressed in siliques, flowers and leaves. Not detected in roots.

The catalysed reaction is (6-4) photoproduct (in DNA) = 2 pyrimidine residues (in DNA).. Its function is as follows. Involved in repair of UV radiation-induced DNA damage. Catalyzes the photoreactivation of pyrimidine [6-4] pyrimidone photoproduct (6-4 products). Binds specifically to DNA containing 6-4 products and repairs these lesions in a visible light-dependent manner. Not required for repair of cyclobutane pyrimidine dimer (CPD). In Arabidopsis thaliana (Mouse-ear cress), this protein is (6-4)DNA photolyase (UVR3).